The sequence spans 151 residues: LVIETIENIATKLSISISFKTDVTQTLIDITEIDLNAQDKILIRNTNAVINIKSKVGLTPLHLATLQNNLSVSKGAYLNDGDANGMTPLHYAAMTGNLEMVDFLKWTPLHLAILFKQLVIELLAKTFFDLAIENGRLNIVAFAVEKYIAAR.

ANK repeat units follow at residues 21-37, 41-52, 56-80, 84-104, 105-116, 117-125, 126-146, and 147-151; these read TDVT…DLNA, ILIRNTNAVINI, VGLT…YLND, NGMT…VDFL, KWTPLHLAILFK, QLVIELLAK, TFFD…AVEK, and YIAAR.

This sequence belongs to the cationic peptide 01 (latrotoxin) family. 02 (alpha-latroinsectotoxin) subfamily. As to quaternary structure, homotetramer in membranes. Expressed by the venom gland.

The protein resides in the secreted. Its subcellular location is the target cell membrane. Insecticidal presynaptic neurotoxin that induces massive neurotransmitter release at insect (but not vertebrate) neuromuscular junctions. Native toxin forms cation-permeable pores (with high permeability to calcium) in lipid membranes locust muscle membrane and artificial lipid bilayers. May bind to insect neurexin-1 homolog, insect adhesion G protein-coupled receptor L1 homolog, and insect receptor-type tyrosine-protein phosphatase S homolog, and induces neurotransmitter exocytosis both by forming tetrameric pores in membranes and signaling via G protein-coupled receptor. Oligomerization is a process independent of divalent cations. The toxin forms channels with 0.55-0.58 nm entrance diameter and a relatively small conductance in planar phospholipid membranes. This chain is Alpha-latroinsectotoxin-Lh1a, found in Latrodectus hasselti (Redback spider).